The following is a 352-amino-acid chain: MLTERQELILKTIIMDFTQSHEPVGSKTVMNQLPVKVSSATVRNEMAALEEKGLLEKTHSSSGRIPSTAGYRYYLDHLINPVKIPASVYNRIIYQLDQPFQQVNEIVQEAAKILSDLTNYTAFAAGPETRSVKVTGFRIVPLSSHQVMAILVTDDGNVKNQIYTLPHHTNGEEIEKAVRLINDQLVGKPLSSVNEVLLKRIADHLVAGGSAPEILDLLQDVIKDAASEQMYVDGQINLLSNYESDDLAKVKSLYKLIDQNDAISSLIGFNPKDEIKNDSKSKVQVKLGSELQSDLLEDYSLLTAQYSVGKYGKGTIALLGPTNMPYSQMIGLLEYFRNELAKKLLDYYGRFK.

Belongs to the HrcA family.

Functionally, negative regulator of class I heat shock genes (grpE-dnaK-dnaJ and groELS operons). Prevents heat-shock induction of these operons. The polypeptide is Heat-inducible transcription repressor HrcA (Lactobacillus gasseri (strain ATCC 33323 / DSM 20243 / BCRC 14619 / CIP 102991 / JCM 1131 / KCTC 3163 / NCIMB 11718 / NCTC 13722 / AM63)).